A 238-amino-acid polypeptide reads, in one-letter code: 3-dehydroquinate dehydratase (238 aa).

3-dehydroquinate contacts are provided by residues 35–37 (ELR) and Arg-68. His-131 (proton donor/acceptor) is an active-site residue. Catalysis depends on Lys-158, which acts as the Schiff-base intermediate with substrate. 2 residues coordinate 3-dehydroquinate: Arg-200 and Gln-223.

It belongs to the type-I 3-dehydroquinase family. Homodimer.

It catalyses the reaction 3-dehydroquinate = 3-dehydroshikimate + H2O. It participates in metabolic intermediate biosynthesis; chorismate biosynthesis; chorismate from D-erythrose 4-phosphate and phosphoenolpyruvate: step 3/7. Functionally, involved in the third step of the chorismate pathway, which leads to the biosynthesis of aromatic amino acids. Catalyzes the cis-dehydration of 3-dehydroquinate (DHQ) and introduces the first double bond of the aromatic ring to yield 3-dehydroshikimate. The polypeptide is 3-dehydroquinate dehydratase (Staphylococcus epidermidis (strain ATCC 35984 / DSM 28319 / BCRC 17069 / CCUG 31568 / BM 3577 / RP62A)).